Reading from the N-terminus, the 514-residue chain is Probable transposase for insertion sequence element IS1353 (514 aa).

A coiled-coil region spans residues 172–216 (KGDTSLEQRHEALLRELAELESQNQRLRMENAILEKASELIKKDM). Residues 346-510 (HASAPNTKWL…SPIEYRHAVG (165 aa)) enclose the Integrase catalytic domain. Residues Asp357 and Asp417 each coordinate Mg(2+).

This sequence belongs to the transposase 8 family.

Probably involved in the transposition of insertion sequence IS1353. In Shigella flexneri, this protein is Probable transposase for insertion sequence element IS1353.